The sequence spans 237 residues: Urease accessory protein UreF (237 aa).

This sequence belongs to the UreF family. As to quaternary structure, ureD, UreF and UreG form a complex that acts as a GTP-hydrolysis-dependent molecular chaperone, activating the urease apoprotein by helping to assemble the nickel containing metallocenter of UreC. The UreE protein probably delivers the nickel.

Its subcellular location is the cytoplasm. Its function is as follows. Required for maturation of urease via the functional incorporation of the urease nickel metallocenter. This chain is Urease accessory protein UreF, found in Rhodopseudomonas palustris (strain HaA2).